A 428-amino-acid chain; its full sequence is Histidinol dehydrogenase (428 aa).

Substrate-binding residues include S234, Q256, and H259. Q256 and H259 together coordinate Zn(2+). Active-site proton acceptor residues include E324 and H325. Substrate contacts are provided by H325, D358, E412, and H417. Residue D358 participates in Zn(2+) binding. A Zn(2+)-binding site is contributed by H417.

The protein belongs to the histidinol dehydrogenase family. It depends on Zn(2+) as a cofactor.

The enzyme catalyses L-histidinol + 2 NAD(+) + H2O = L-histidine + 2 NADH + 3 H(+). Its pathway is amino-acid biosynthesis; L-histidine biosynthesis; L-histidine from 5-phospho-alpha-D-ribose 1-diphosphate: step 9/9. Its function is as follows. Catalyzes the sequential NAD-dependent oxidations of L-histidinol to L-histidinaldehyde and then to L-histidine. The polypeptide is Histidinol dehydrogenase (Pelagibacter ubique (strain HTCC1062)).